The chain runs to 467 residues: Stromal membrane-associated protein 1 (467 aa).

In terms of domain architecture, Arf-GAP spans 18-136 (QLILSKLLRE…KYYDKNAIAI (119 aa)). The C4-type zinc-finger motif lies at 33-56 (CADCEAKGPRWASWNIGVFICIRC). Positions 145 to 155 (PLQPLVSSPSL) are enriched in polar residues. Disordered stretches follow at residues 145-224 (PLQP…LDGP) and 408-467 (KFGL…QLWK). 2 stretches are compositionally biased toward basic and acidic residues: residues 160–185 (DKNKLEKEKEKKKEEKKREKEPEKPA) and 192–204 (KLQKKDQQLEPKK). The short motif at 218-222 (LLGLD) is the Interaction with clathrin heavy chains element. Positions 413-438 (QAQQPQWSLSQMNQQMAGMSISSATP) are enriched in polar residues. Residues 446 to 467 (SSTTAGWSGSSSGQTLSTQLWK) are compositionally biased toward low complexity.

Interacts with ARF6. Interacts with clathrin heavy chains via the clathrin box-like motif. Detected in bone marrow, adrenal gland, trachea, lymph node, spinal cord, peripheral blood leukocytes, thyroid and stomach.

It localises to the cell membrane. Its function is as follows. GTPase activating protein that acts on ARF6. Plays a role in clathrin-dependent endocytosis. May play a role in erythropoiesis. The polypeptide is Stromal membrane-associated protein 1 (SMAP1) (Homo sapiens (Human)).